A 536-amino-acid chain; its full sequence is GMP synthase [glutamine-hydrolyzing] (536 aa).

Residues 19–212 (RILILDFGSQ…VHEICDCAGS (194 aa)) enclose the Glutamine amidotransferase type-1 domain. Catalysis depends on Cys-96, which acts as the Nucleophile. Catalysis depends on residues His-186 and Glu-188. Positions 213-411 (WTPDNIIDMR…LGLPAKMINR (199 aa)) constitute a GMPS ATP-PPase domain. Residue 240-246 (SGGVDSS) participates in ATP binding.

In terms of assembly, homodimer.

The catalysed reaction is XMP + L-glutamine + ATP + H2O = GMP + L-glutamate + AMP + diphosphate + 2 H(+). It functions in the pathway purine metabolism; GMP biosynthesis; GMP from XMP (L-Gln route): step 1/1. Catalyzes the synthesis of GMP from XMP. The polypeptide is GMP synthase [glutamine-hydrolyzing] (Psychrobacter arcticus (strain DSM 17307 / VKM B-2377 / 273-4)).